The chain runs to 240 residues: Glutamine transport ATP-binding protein GlnQ (240 aa).

The ABC transporter domain occupies 2 to 236 (IEFKNVSKHF…PPSQRLQEFL (235 aa)). 34–41 (GPSGSGKS) is a binding site for ATP.

Belongs to the ABC transporter superfamily. In terms of assembly, heterotetramer with 2 subunits of GlnQ and 2 subunits of GlnP.

The protein resides in the cell inner membrane. Functionally, part of the binding-protein-dependent transport system for glutamine. Probably responsible for energy coupling to the transport system. This is Glutamine transport ATP-binding protein GlnQ (glnQ) from Escherichia coli (strain K12).